The primary structure comprises 812 residues: Endogenous retrovirus group K member 18 Pol protein (812 aa).

The 189-residue stretch at 57–245 (LEKGHIEPSF…TPFHYLGMQI (189 aa)) folds into the Reverse transcriptase domain. The short motif at 161 to 164 (LPQG) is the LPQG element. The YXDD motif lies at 195–198 (YFDD). Positions 460-590 (LENALTVFTD…ADLLVSSAFI (131 aa)) constitute an RNase H type-1 domain. Aspartate 469, glutamate 497, aspartate 517, and aspartate 582 together coordinate Mg(2+). The segment at 587-628 (SAFIKAQELHALTHVNAAGLKNKFDVTWKQAKDIVQHCTQCQ) adopts an Integrase-type zinc-finger fold. Histidine 596, histidine 600, cysteine 624, and cysteine 627 together coordinate Zn(2+). The region spanning 637–803 (AGVNPEVCVL…TSAEHLTGKK (167 aa)) is the Integrase catalytic domain.

This sequence belongs to the beta type-B retroviral polymerase family. HERV class-II K(HML-2) pol subfamily.

The enzyme catalyses DNA(n) + a 2'-deoxyribonucleoside 5'-triphosphate = DNA(n+1) + diphosphate. It carries out the reaction Endonucleolytic cleavage to 5'-phosphomonoester.. Its function is as follows. Early post-infection, the reverse transcriptase converts the viral RNA genome into double-stranded viral DNA. The RNase H domain of the reverse transcriptase performs two functions. It degrades the RNA template and specifically removes the RNA primer from the RNA/DNA hybrid. Following nuclear import, the integrase catalyzes the insertion of the linear, double-stranded viral DNA into the host cell chromosome. Endogenous Pol proteins may have kept, lost or modified their original function during evolution. This Homo sapiens (Human) protein is Endogenous retrovirus group K member 18 Pol protein (ERVK-18).